The primary structure comprises 162 residues: uncharacterized protein (162 aa).

Residues 7-27 (LGGVMLFAIVSLMVCGCMVVF) traverse the membrane as a helical segment.

It is found in the membrane. This is an uncharacterized protein from Methanocaldococcus jannaschii (strain ATCC 43067 / DSM 2661 / JAL-1 / JCM 10045 / NBRC 100440) (Methanococcus jannaschii).